The sequence spans 366 residues: Carbamoyl phosphate synthase small chain (366 aa).

Positions 1-171 (MLEKRYLVLE…KTPYVSTGSD (171 aa)) are CPSase. Residues Ser-47, Gly-221, and Gly-223 each coordinate L-glutamine. The Glutamine amidotransferase type-1 domain maps to 173-360 (SVVLLDFGKK…IAMMKDFKEK (188 aa)). Cys-248 (nucleophile) is an active-site residue. L-glutamine-binding residues include Leu-249, Gln-252, Asn-290, Gly-292, and Tyr-293. Active-site residues include His-333 and Glu-335.

It belongs to the CarA family. In terms of assembly, composed of two chains; the small (or glutamine) chain promotes the hydrolysis of glutamine to ammonia, which is used by the large (or ammonia) chain to synthesize carbamoyl phosphate. Tetramer of heterodimers (alpha,beta)4.

The enzyme catalyses hydrogencarbonate + L-glutamine + 2 ATP + H2O = carbamoyl phosphate + L-glutamate + 2 ADP + phosphate + 2 H(+). The catalysed reaction is L-glutamine + H2O = L-glutamate + NH4(+). Its pathway is amino-acid biosynthesis; L-arginine biosynthesis; carbamoyl phosphate from bicarbonate: step 1/1. It functions in the pathway pyrimidine metabolism; UMP biosynthesis via de novo pathway; (S)-dihydroorotate from bicarbonate: step 1/3. Its function is as follows. Small subunit of the glutamine-dependent carbamoyl phosphate synthetase (CPSase). CPSase catalyzes the formation of carbamoyl phosphate from the ammonia moiety of glutamine, carbonate, and phosphate donated by ATP, constituting the first step of 2 biosynthetic pathways, one leading to arginine and/or urea and the other to pyrimidine nucleotides. The small subunit (glutamine amidotransferase) binds and cleaves glutamine to supply the large subunit with the substrate ammonia. The sequence is that of Carbamoyl phosphate synthase small chain from Staphylococcus epidermidis (strain ATCC 12228 / FDA PCI 1200).